The primary structure comprises 84 residues: U21-theraphotoxin-Cg1a 3 (84 aa).

Residues 1 to 21 (MKVSVLITLAVLGVMFLLTSA) form the signal peptide. Residues 22–47 (EERGSDQMDSPAWLKSMERIFQSEER) constitute a propeptide that is removed on maturation. 3 disulfide bridges follow: Cys49–Cys63, Cys56–Cys68, and Cys62–Cys76. Val82 is modified (valine amide).

The protein belongs to the neurotoxin 10 (Hwtx-1) family. 05 (F4a) subfamily. Expressed by the venom gland.

It localises to the secreted. Functionally, probable ion channel inhibitor. This chain is U21-theraphotoxin-Cg1a 3, found in Chilobrachys guangxiensis (Chinese earth tiger tarantula).